The primary structure comprises 320 residues: Protein PXR1 (320 aa).

The segment covering Met1 to Lys11 has biased composition (basic residues). The disordered stretch occupies residues Met1–Ser24. The span at Asp15 to Ser24 shows a compositional bias: polar residues. Residues Thr25–Arg79 enclose the G-patch domain. The tract at residues Gly152–His298 is disordered. The span at Lys169–Ala182 shows a compositional bias: basic residues. Composition is skewed to basic and acidic residues over residues Arg203–Asp214, Lys243–Ser256, and Gln269–Pro288.

It belongs to the PINX1 family.

The protein resides in the nucleus. It localises to the nucleolus. Involved in rRNA-processing at A0, A1 and A2 sites and negatively regulates telomerase. The protein is Protein PXR1 (PXR1) of Ajellomyces capsulatus (strain NAm1 / WU24) (Darling's disease fungus).